The sequence spans 239 residues: Large ribosomal subunit protein uL3 (239 aa).

Disordered regions lie at residues 140–164 (SHRS…KMPG) and 211–239 (PLPK…QEGA). Q151 is modified (N5-methylglutamine).

This sequence belongs to the universal ribosomal protein uL3 family. Part of the 50S ribosomal subunit. Forms a cluster with proteins L14 and L19. Methylated by PrmB.

Functionally, one of the primary rRNA binding proteins, it binds directly near the 3'-end of the 23S rRNA, where it nucleates assembly of the 50S subunit. The protein is Large ribosomal subunit protein uL3 of Bradyrhizobium sp. (strain ORS 278).